The following is a 624-amino-acid chain: ABC transporter G family member 23 (624 aa).

Residues leucine 52–glutamate 296 enclose the ABC transporter domain. Glycine 84 to serine 91 is a binding site for ATP. The 211-residue stretch at threonine 350–tyrosine 560 folds into the ABC transmembrane type-2 domain. 6 helical membrane-spanning segments follow: residues leucine 369–threonine 389, leucine 402–isoleucine 422, isoleucine 450–isoleucine 470, phenylalanine 480–phenylalanine 500, glycine 511–proline 531, and isoleucine 595–leucine 615.

This sequence belongs to the ABC transporter superfamily. ABCG family. Eye pigment precursor importer (TC 3.A.1.204) subfamily.

It localises to the membrane. The chain is ABC transporter G family member 23 (ABCG23) from Arabidopsis thaliana (Mouse-ear cress).